The primary structure comprises 103 residues: Small ribosomal subunit protein uS10 (103 aa).

It belongs to the universal ribosomal protein uS10 family. In terms of assembly, part of the 30S ribosomal subunit.

Functionally, involved in the binding of tRNA to the ribosomes. In Chlorobium phaeobacteroides (strain DSM 266 / SMG 266 / 2430), this protein is Small ribosomal subunit protein uS10.